A 993-amino-acid chain; its full sequence is Lateral signaling target protein 2 homolog (993 aa).

Disordered regions lie at residues 340–449 (DQRN…DTTD), 494–623 (DGYG…TVVQ), 759–813 (GARH…GDQE), and 825–902 (AVNE…PPAW). Over residues 343–360 (NNNNNINNNSSSSSNSNS) the composition is skewed to low complexity. Residues 372 to 405 (RSPSMLSLSTASPTPSHSIGSTFSAATSSTNPPV) show a composition bias toward polar residues. Over residues 409–448 (DGDDADDDDDGDDDDEDDDDDVDDDLVGNDDSDDDDDDTT) the composition is skewed to acidic residues. Residues serine 525 and serine 526 each carry the phosphoserine modification. The segment covering 535-549 (SHNNTTTIKSPDSDG) has biased composition (polar residues). Positions 559-608 (SRQRHSHHHHRHHHHHHRHSSHSSHSHHHQHQQHHSQPHPHRTTRSGRKR) are enriched in basic residues. A compositionally biased stretch (low complexity) spans 759 to 801 (GARHSAGASMQRNHTTIDNNNSTSSSPPDATITTTTTTTTTRS). At serine 808 the chain carries Phosphoserine. Low complexity-rich tracts occupy residues 842–862 (SNTP…QNSP) and 884–896 (TTAT…GTGT). The segment at 905–965 (DGKAPRCMSC…VCRDCYAREI (61 aa)) adopts an FYVE-type zinc-finger fold. Positions 911, 914, 927, 930, 935, 938, 957, and 960 each coordinate Zn(2+). The disordered stretch occupies residues 968–993 (SGGGGGGVVQMQRQQAANRPQTASAS). Residues 978-993 (MQRQQAANRPQTASAS) are compositionally biased toward polar residues.

It belongs to the lst-2 family.

In terms of biological role, negative regulator of epidermal growth factor receptor (EGFR) signaling. The sequence is that of Lateral signaling target protein 2 homolog from Drosophila willistoni (Fruit fly).